A 185-amino-acid polypeptide reads, in one-letter code: Elongation factor P (185 aa).

The protein belongs to the elongation factor P family.

Its subcellular location is the cytoplasm. It functions in the pathway protein biosynthesis; polypeptide chain elongation. Functionally, involved in peptide bond synthesis. Stimulates efficient translation and peptide-bond synthesis on native or reconstituted 70S ribosomes in vitro. Probably functions indirectly by altering the affinity of the ribosome for aminoacyl-tRNA, thus increasing their reactivity as acceptors for peptidyl transferase. This Burkholderia mallei (strain NCTC 10247) protein is Elongation factor P.